Reading from the N-terminus, the 940-residue chain is UvrABC system protein A (940 aa).

31–38 (GLSGSGKS) contributes to the ATP binding site. The segment at 252 to 279 (CPHCGYSMRELEPRLFSFNNPAGACPTC) adopts a C4-type zinc-finger fold. 2 consecutive ABC transporter domains span residues 309–586 (WDQK…PNSL) and 606–936 (KDAK…RFLK). 639 to 646 (GVSGSGKS) is a binding site for ATP. A C4-type zinc finger spans residues 739-765 (CEACQGDGVIKVEMHFLPDVYVPCDVC).

This sequence belongs to the ABC transporter superfamily. UvrA family. Forms a heterotetramer with UvrB during the search for lesions.

It is found in the cytoplasm. The UvrABC repair system catalyzes the recognition and processing of DNA lesions. UvrA is an ATPase and a DNA-binding protein. A damage recognition complex composed of 2 UvrA and 2 UvrB subunits scans DNA for abnormalities. When the presence of a lesion has been verified by UvrB, the UvrA molecules dissociate. The sequence is that of UvrABC system protein A from Vibrio cholerae serotype O1 (strain ATCC 39315 / El Tor Inaba N16961).